The chain runs to 258 residues: Probable N-acetylglucosaminyl-phosphatidylinositol de-N-acetylase (258 aa).

The interval 147 to 170 is disordered; sequence KSSSTTTTSTTSSSSSSSSLSNRT. The segment covering 148 to 170 has biased composition (low complexity); the sequence is SSSTTTTSTTSSSSSSSSLSNRT.

Belongs to the PIGL family.

The protein resides in the endoplasmic reticulum membrane. The catalysed reaction is a 6-(N-acetyl-alpha-D-glucosaminyl)-1-(1,2-diacyl-sn-glycero-3-phospho)-1D-myo-inositol + H2O = a 6-(alpha-D-glucosaminyl)-1-(1,2-diacyl-sn-glycero-3-phospho)-1D-myo-inositol + acetate. Its pathway is glycolipid biosynthesis; glycosylphosphatidylinositol-anchor biosynthesis. In terms of biological role, involved in the second step of GPI biosynthesis. De-N-acetylation of N-acetylglucosaminyl-phosphatidylinositol. The protein is Probable N-acetylglucosaminyl-phosphatidylinositol de-N-acetylase (pigl) of Dictyostelium discoideum (Social amoeba).